We begin with the raw amino-acid sequence, 186 residues long: UPF0397 protein SGO_0469 (186 aa).

The next 5 helical transmembrane spans lie at 14–34, 50–70, 77–97, 119–139, and 152–172; these read VVATGIGAALFVVIGMVSIPT, LFGVVFGPIVGFLTGFIGHAL, GNPWWTWVLASGLFGLVVGLL, AQFVANALVWVVIAPLGDILI, and VVATVANGLTVAVAGTLLLIA.

The protein belongs to the UPF0397 family.

It localises to the cell membrane. In Streptococcus gordonii (strain Challis / ATCC 35105 / BCRC 15272 / CH1 / DL1 / V288), this protein is UPF0397 protein SGO_0469.